We begin with the raw amino-acid sequence, 726 residues long: 1,4-alpha-glucan branching enzyme GlgB (726 aa).

The Nucleophile role is filled by Asp407. Glu460 (proton donor) is an active-site residue.

The protein belongs to the glycosyl hydrolase 13 family. GlgB subfamily. Monomer.

The catalysed reaction is Transfers a segment of a (1-&gt;4)-alpha-D-glucan chain to a primary hydroxy group in a similar glucan chain.. Its pathway is glycan biosynthesis; glycogen biosynthesis. Functionally, catalyzes the formation of the alpha-1,6-glucosidic linkages in glycogen by scission of a 1,4-alpha-linked oligosaccharide from growing alpha-1,4-glucan chains and the subsequent attachment of the oligosaccharide to the alpha-1,6 position. This chain is 1,4-alpha-glucan branching enzyme GlgB, found in Hydrogenovibrio crunogenus (strain DSM 25203 / XCL-2) (Thiomicrospira crunogena).